Consider the following 123-residue polypeptide: Small ribosomal subunit protein bS16 (123 aa).

The disordered stretch occupies residues 86-123 (PVRAEQTKQPQPKAKAQQRAKDQAERDAAAAAEAAAGE). Residues 93–102 (KQPQPKAKAQ) show a composition bias toward low complexity. Residues 104-113 (RAKDQAERDA) are compositionally biased toward basic and acidic residues. Residues 114–123 (AAAAEAAAGE) are compositionally biased toward low complexity.

The protein belongs to the bacterial ribosomal protein bS16 family.

The protein is Small ribosomal subunit protein bS16 of Paramagnetospirillum magneticum (strain ATCC 700264 / AMB-1) (Magnetospirillum magneticum).